The chain runs to 181 residues: Ras-like protein 1 (181 aa).

Residue 10-17 (GAGGVGKS) participates in GTP binding. The Effector region signature appears at 32 to 40 (YDPTIEDSY). GTP-binding positions include 57-61 (DTAGQ) and 116-119 (NKCD). At C178 the chain carries Cysteine methyl ester. The S-geranylgeranyl cysteine moiety is linked to residue C178. Residues 179 to 181 (KML) constitute a propeptide, removed in mature form.

This sequence belongs to the small GTPase superfamily. Ras family.

It is found in the cell membrane. The catalysed reaction is GTP + H2O = GDP + phosphate + H(+). With respect to regulation, alternates between an inactive form bound to GDP and an active form bound to GTP. Activated by a guanine nucleotide-exchange factor (GEF) and inactivated by a GTPase-activating protein (GAP). Functionally, ras proteins bind GDP/GTP and possess intrinsic GTPase activity. Plays a role in eye development by regulating cell growth, survival of postmitotic ommatidial cells and differentiation of photoreceptor cells. During larval development, mediates Ptth/tor signaling leading to the production of ecdysone, a hormone required for the initiation of metamorphosis. The protein is Ras-like protein 1 of Drosophila mojavensis (Fruit fly).